Reading from the N-terminus, the 439-residue chain is Glycosyl hydrolase DigH (439 aa).

An N-terminal signal peptide occupies residues 1-27 (MDICSRNEKLAIRRPAILVALALLLCS). Cys-28 is lipidated: N-palmitoyl cysteine. Cys-28 is lipidated: S-diacylglycerol cysteine. The tract at residues 34–54 (ESMVTPPAGSKPPATTQQSSQ) is disordered.

It belongs to the glycosyl hydrolase-like 10 (GHL10) family.

The protein localises to the cell outer membrane. Functionally, divisome-localized glycosyl hydrolase that cleaves peptide-free (denuded) peptidoglycans. This chain is Glycosyl hydrolase DigH, found in Escherichia coli O6:H1 (strain CFT073 / ATCC 700928 / UPEC).